We begin with the raw amino-acid sequence, 950 residues long: Bifunctional glutamine synthetase adenylyltransferase/adenylyl-removing enzyme (950 aa).

The tract at residues 1–443 (MSLPSPLLPV…VFVTLIGDEE (443 aa)) is adenylyl removase. Residues 450-950 (ERHFNELWDM…WQEWLESSTI (501 aa)) form an adenylyl transferase region.

It belongs to the GlnE family. Mg(2+) serves as cofactor.

It catalyses the reaction [glutamine synthetase]-O(4)-(5'-adenylyl)-L-tyrosine + phosphate = [glutamine synthetase]-L-tyrosine + ADP. The catalysed reaction is [glutamine synthetase]-L-tyrosine + ATP = [glutamine synthetase]-O(4)-(5'-adenylyl)-L-tyrosine + diphosphate. Functionally, involved in the regulation of glutamine synthetase GlnA, a key enzyme in the process to assimilate ammonia. When cellular nitrogen levels are high, the C-terminal adenylyl transferase (AT) inactivates GlnA by covalent transfer of an adenylyl group from ATP to specific tyrosine residue of GlnA, thus reducing its activity. Conversely, when nitrogen levels are low, the N-terminal adenylyl removase (AR) activates GlnA by removing the adenylyl group by phosphorolysis, increasing its activity. The regulatory region of GlnE binds the signal transduction protein PII (GlnB) which indicates the nitrogen status of the cell. The chain is Bifunctional glutamine synthetase adenylyltransferase/adenylyl-removing enzyme from Vibrio vulnificus (strain YJ016).